The following is a 388-amino-acid chain: Alanine racemase (388 aa).

Lys-39 (proton acceptor; specific for D-alanine) is an active-site residue. The residue at position 39 (Lys-39) is an N6-(pyridoxal phosphate)lysine. The residue at position 129 (Lys-129) is an N6-carboxylysine. Arg-136 provides a ligand contact to substrate. Tyr-265 acts as the Proton acceptor; specific for L-alanine in catalysis. Met-312 contacts substrate.

Belongs to the alanine racemase family. In terms of assembly, homodimer. Pyridoxal 5'-phosphate serves as cofactor.

It carries out the reaction L-alanine = D-alanine. It participates in amino-acid biosynthesis; D-alanine biosynthesis; D-alanine from L-alanine: step 1/1. With respect to regulation, inhibited by acetate and propionate. Irreversibly inhibited by cycloserine. Its function is as follows. Catalyzes the interconversion of L-alanine and D-alanine. Also weakly active on serine. In Geobacillus stearothermophilus (Bacillus stearothermophilus), this protein is Alanine racemase (alr).